A 373-amino-acid polypeptide reads, in one-letter code: Diels-Alderase (373 aa).

It belongs to the Diels-Alderase family.

It carries out the reaction (5S)-3-[(2E,6R,8E,10E,12E)-2,6-dimethyltetradeca-2,8,10,12-tetraenoyl]-5-(hydroxymethyl)pyrrolidine-2,4-dione = trichosetin. It participates in mycotoxin biosynthesis. Hybrid PKS-NRPS synthetase; part of the gene cluster that mediates the biosynthesis of trichosetin, a trans-fused decalin-containing tetramic acid with antimicrobial activity. The PKS module of PKS-NRPS1 together with the enoylreductase (ER) catalyze the formation of the polyketide unit which is then conjugated to L-serine by the condensation domain of the PKS-NRPS1 NRPS module. Activity of the Dieckmann cyclase domain (RED) results in release of the Dieckmann product intermediate. Diels-Alderase (DA) is involved in endo-selective Diels-Alder cycloaddition to form the decalin ring, leading to the production of N-desmethylequisetin also called trichosetin. The cluster does not contain the equisetin N-methyltransferase and consequently, trichosetin is isolated as final product. The chain is Diels-Alderase from Gibberella fujikuroi (strain CBS 195.34 / IMI 58289 / NRRL A-6831) (Bakanae and foot rot disease fungus).